A 197-amino-acid chain; its full sequence is Peptidyl-tRNA hydrolase (197 aa).

Tyrosine 18 contributes to the tRNA binding site. Histidine 23 functions as the Proton acceptor in the catalytic mechanism. Residues phenylalanine 69, asparagine 71, and asparagine 117 each coordinate tRNA.

The protein belongs to the PTH family. As to quaternary structure, monomer.

The protein localises to the cytoplasm. The catalysed reaction is an N-acyl-L-alpha-aminoacyl-tRNA + H2O = an N-acyl-L-amino acid + a tRNA + H(+). Hydrolyzes ribosome-free peptidyl-tRNAs (with 1 or more amino acids incorporated), which drop off the ribosome during protein synthesis, or as a result of ribosome stalling. In terms of biological role, catalyzes the release of premature peptidyl moieties from peptidyl-tRNA molecules trapped in stalled 50S ribosomal subunits, and thus maintains levels of free tRNAs and 50S ribosomes. In Tolumonas auensis (strain DSM 9187 / NBRC 110442 / TA 4), this protein is Peptidyl-tRNA hydrolase.